Consider the following 63-residue polypeptide: Movement protein TGBp3 (63 aa).

Residues 1-21 traverse the membrane as a helical segment; the sequence is MIVYVLVGLSAFCIVLYLISQ. Residues 22-63 are Cytoplasmic-facing; sequence GQSDCVVLITGESVRVQGCRIDGEFGSVLSKLKPFGCGSFRS.

Belongs to the Tymovirales TGBp3 protein family.

The protein localises to the host endoplasmic reticulum membrane. Plays a role in viral cell-to-cell propagation, by facilitating genome transport to neighboring plant cells through plasmosdesmata. May induce the formation of granular vesicles derived from the Endoplasmic reticulum, which align on actin filaments. The chain is Movement protein TGBp3 from Solanum tuberosum (Potato).